The chain runs to 342 residues: Putative anthocyanidin reductase (342 aa).

NADP(+) is bound by residues R44, K51, 71 to 72, 91 to 93, Y172, K176, 199 to 202, and S214; these read EL, VAT, and PVLV. The active-site Proton donor is the K176.

Belongs to the NAD(P)-dependent epimerase/dehydratase family. Dihydroflavonol-4-reductase subfamily. In terms of tissue distribution, highly expressed in leaves and weakly in stems. Not expressed in roots.

It participates in secondary metabolite biosynthesis; flavonoid biosynthesis. The protein is Putative anthocyanidin reductase of Ginkgo biloba (Ginkgo).